The sequence spans 198 residues: Cyclin-dependent kinase inhibitor 1B (198 aa).

Over residues 1 to 11 the composition is skewed to polar residues; that stretch reads MSNVRVSNGSP. The segment at 1–22 is disordered; sequence MSNVRVSNGSPSLERMDARQAE. S10 is subject to Phosphoserine; by UHMK1. The segment at 51–91 is interaction with CDK2; the sequence is DMEEASQRKWNFDFQNHKPLEGKYEWQEVEKGSLPEFYYRP. Y74 carries the post-translational modification Phosphotyrosine; by SRC. Residues 87 to 198 form a disordered region; sequence FYYRPPRPPK…KKPGLRRRQT (112 aa). The residue at position 88 (Y88) is a Phosphotyrosine; by ABL, LYN and SRC. Y89 is modified (phosphotyrosine). A compositionally biased stretch (polar residues) spans 104–113; sequence QESQDVSGNR. The span at 126 to 137 shows a compositional bias: basic and acidic residues; sequence EDTHLVDQKTDT. The short motif at 153 to 169 is the Nuclear localization signal element; sequence KRPATDDSSPQNKRANR. T157 is modified (phosphothreonine; by CaMK1, PKB/AKT1 and PIM1). T170 is modified (phosphothreonine). Polar residues predominate over residues 175–186; it reads SDGSPNAGSVEQ. T187 carries the phosphothreonine; by PKB/AKT1, CDK1 and CDK2 modification. T198 carries the post-translational modification Phosphothreonine; by CaMK1, PKB/AKT1, RPS6KA1, RPS6KA3 and PIM1.

The protein belongs to the CDI family. In terms of assembly, forms a ternary complex composed of CCNE1, CDK2 and CDKN1B. Interacts directly with CCNE1; the interaction is inhibited by CDK2-dependent phosphorylation on Thr-187. Interacts with COPS5, subunit of the COP9 signalosome complex; the interaction leads to CDKN1B degradation. Interacts with NUP50; the interaction leads to nuclear import and degradation of phosphorylated CDKN1B. Interacts with CCND1 and SNX6. Interacts (Thr-198-phosphorylated form) with 14-3-3 proteins, binds strongly YWHAQ, weakly YWHAE and YWHAH, but not YWHAB nor YWHAZ; the interaction with YWHAQ results in translocation to the cytoplasm. Interacts with AKT1 and LYN; the interactions lead to cytoplasmic mislocation, phosphorylation of CDKN1B and inhibition of cell cycle arrest. Forms a ternary complex with CCNA2 and CDK2; CDKN1B inhibits the kinase activity of CDK2 through conformational rearrangements. Interacts (unphosphorylated form) with CDK2. Forms a complex with CDK2 and SPDYA, but does not directly interact with SPDYA. Forms a ternary complex composed of cyclin D, CDK4 and CDKN1B. Interacts (phosphorylated on Tyr-88 and Tyr-89) with CDK4; the interaction is required for cyclin D and CDK4 complex assembly, induces nuclear translocation and activates the CDK4 kinase activity. Interacts with GRB2. Interacts with PIM1. Identified in a complex with SKP1, SKP2 and CKS1B. Interacts with UHMK1; the interaction leads to cytoplasmic mislocation, phosphorylation of CDKN1B and inhibition of cell cycle arrest. Also interacts with CDK1. Dephosphorylated on Thr-187 by PPM1H, leading to CDKN1B stability. Post-translationally, phosphorylated; phosphorylation occurs on serine, threonine and tyrosine residues. Phosphorylation on Ser-10 is the major site of phosphorylation in resting cells, takes place at the G(0)-G(1) phase and leads to protein stability. Phosphorylation on other sites is greatly enhanced by mitogens, growth factors, cMYC and in certain cancer cell lines. The phosphorylated form found in the cytoplasm is inactivate. Phosphorylation on Thr-198 is required for interaction with 14-3-3 proteins. Phosphorylation on Thr-187, by CDK1 and CDK2 leads to protein ubiquitination and proteasomal degradation. Tyrosine phosphorylation promotes this process. Phosphorylation by PKB/AKT1 can be suppressed by LY294002, an inhibitor of the catalytic subunit of PI3K. Phosphorylation on Tyr-88 and Tyr-89 has no effect on binding CDK2, but is required for binding CDK4. Dephosphorylated on tyrosine residues by G-CSF. Dephosphorylated on Thr-187 by PPM1H, leading to CDKN1B stability. Ubiquitinated; in the cytoplasm by the KPC complex (composed of RNF123/KPC1 and UBAC1/KPC2) and, in the nucleus, by SCF(SKP2). The latter requires prior phosphorylation on Thr-187. Ubiquitinated; by a TRIM21-containing SCF(SKP2)-like complex; leads to its degradation. In terms of processing, subject to degradation in the lysosome. Interaction with SNX6 promotes lysosomal degradation.

It is found in the nucleus. The protein resides in the cytoplasm. The protein localises to the endosome. Functionally, important regulator of cell cycle progression. Inhibits the kinase activity of CDK2 bound to cyclin A, but has little inhibitory activity on CDK2 bound to SPDYA. Involved in G1 arrest. Potent inhibitor of cyclin E- and cyclin A-CDK2 complexes. Forms a complex with cyclin type D-CDK4 complexes and is involved in the assembly, stability, and modulation of CCND1-CDK4 complex activation. Acts either as an inhibitor or an activator of cyclin type D-CDK4 complexes depending on its phosphorylation state and/or stoichometry. The polypeptide is Cyclin-dependent kinase inhibitor 1B (CDKN1B) (Felis catus (Cat)).